A 181-amino-acid chain; its full sequence is Adenine phosphoribosyltransferase (181 aa).

Belongs to the purine/pyrimidine phosphoribosyltransferase family. Homodimer.

The protein localises to the cytoplasm. The enzyme catalyses AMP + diphosphate = 5-phospho-alpha-D-ribose 1-diphosphate + adenine. It functions in the pathway purine metabolism; AMP biosynthesis via salvage pathway; AMP from adenine: step 1/1. Catalyzes a salvage reaction resulting in the formation of AMP, that is energically less costly than de novo synthesis. This is Adenine phosphoribosyltransferase from Psychromonas ingrahamii (strain DSM 17664 / CCUG 51855 / 37).